The sequence spans 260 residues: Ribonuclease 3 (260 aa).

The region spanning 16-145 (VQLLESRLGL…VFGAVFLTSG (130 aa)) is the RNase III domain. Glutamate 58 provides a ligand contact to Mg(2+). The active site involves aspartate 62. Mg(2+) is bound by residues aspartate 131 and glutamate 134. Residue glutamate 134 is part of the active site. The 70-residue stretch at 172-241 (DYKTLLQEMA…AQATLEKLRE (70 aa)) folds into the DRBM domain. A disordered region spans residues 219–260 (ATGRSKKEAEQSAAQATLEKLREDAACPTSPPPGTPRHDTPA).

This sequence belongs to the ribonuclease III family. As to quaternary structure, homodimer. It depends on Mg(2+) as a cofactor.

The protein localises to the cytoplasm. The catalysed reaction is Endonucleolytic cleavage to 5'-phosphomonoester.. Functionally, digests double-stranded RNA. Involved in the processing of primary rRNA transcript to yield the immediate precursors to the large and small rRNAs (23S and 16S). Processes some mRNAs, and tRNAs when they are encoded in the rRNA operon. Processes pre-crRNA and tracrRNA of type II CRISPR loci if present in the organism. The sequence is that of Ribonuclease 3 from Myxococcus xanthus (strain DK1622).